We begin with the raw amino-acid sequence, 266 residues long: Hemin import ATP-binding protein HmuV (266 aa).

Residues 12–248 (LEASHLHYHV…ETLTQWYQAD (237 aa)) form the ABC transporter domain. ATP is bound at residue 44-51 (GPNGAGKS).

Belongs to the ABC transporter superfamily. Heme (hemin) importer (TC 3.A.1.14.5) family. The complex is composed of two ATP-binding proteins (HmuV), two transmembrane proteins (HmuU) and a solute-binding protein (HmuT).

Its subcellular location is the cell inner membrane. Its function is as follows. Part of the ABC transporter complex HmuTUV involved in hemin import. Responsible for energy coupling to the transport system. This is Hemin import ATP-binding protein HmuV from Yersinia pestis bv. Antiqua (strain Antiqua).